The following is a 124-amino-acid chain: MSKTAEILEAVKGLTVLELAELVKAFEEEFGVSAAAPVAVAAAPGAAAAPVAEEQTEFDVVLMNAGAGKINVIKVVREITGLGLKEAKELVDGAPKPVKEKVSKDDAEAIKAKLVEAGATVEVK.

It belongs to the bacterial ribosomal protein bL12 family. As to quaternary structure, homodimer. Part of the ribosomal stalk of the 50S ribosomal subunit. Forms a multimeric L10(L12)X complex, where L10 forms an elongated spine to which 2 to 4 L12 dimers bind in a sequential fashion. Binds GTP-bound translation factors.

Forms part of the ribosomal stalk which helps the ribosome interact with GTP-bound translation factors. Is thus essential for accurate translation. The sequence is that of Large ribosomal subunit protein bL12 from Desulfitobacterium hafniense (strain DSM 10664 / DCB-2).